We begin with the raw amino-acid sequence, 498 residues long: Archaemetzincin-1 (498 aa).

His-261 is a Zn(2+) binding site. Glu-262 serves as the catalytic Proton acceptor. The Zn(2+) site is built by His-265, Cys-272, Cys-277, Cys-296, and Cys-299. The disordered stretch occupies residues 332–381; it reads QEAGEPSVWEDTPPASADSGMCCESDSEPGTSVSEPLTPDAGSHTFASGP.

Belongs to the peptidase M54 family. Requires Zn(2+) as cofactor.

Its function is as follows. Probable zinc metalloprotease. The chain is Archaemetzincin-1 (AMZ1) from Homo sapiens (Human).